The primary structure comprises 81 residues: Small cysteine-rich protein 1 1 (81 aa).

A signal peptide spans 1-19 (MGVHFNICLLLLLVATISS). Residues 20–39 (QTLKATEKDDSTDENPFGIY) constitute a propeptide that is removed on maturation.

This sequence belongs to the Cnidaria small cysteine-rich protein (SCRiP) family. alpha subfamily. In terms of processing, the basic myotoxic domain of rattlesnake crotamine toxins (with 6 Cys residues) has been detected in this protein. However, this protein contains 2 additional Cys at the C-terminal region. Hence, this protein may contain 4 disulfide bonds instead of the 3 suggested by the myotoxin domain.

The protein localises to the secreted. It is found in the nematocyst. Functionally, induces neurotoxic symptoms on zebrafish. Has also been claimed to be implied in calcification, but tests on homolog proteins suggest that proteins of this family have a neurotoxic function and not a calcification function. The chain is Small cysteine-rich protein 1 1 from Montipora capitata (Rice coral).